The chain runs to 387 residues: Arginine biosynthesis bifunctional protein ArgJ 2 (387 aa).

Thr-147, Lys-169, Thr-180, Glu-259, Asn-382, and Thr-387 together coordinate substrate. The Nucleophile role is filled by Thr-180.

This sequence belongs to the ArgJ family. Heterotetramer of two alpha and two beta chains.

The protein resides in the cytoplasm. The enzyme catalyses N(2)-acetyl-L-ornithine + L-glutamate = N-acetyl-L-glutamate + L-ornithine. It carries out the reaction L-glutamate + acetyl-CoA = N-acetyl-L-glutamate + CoA + H(+). The protein operates within amino-acid biosynthesis; L-arginine biosynthesis; L-ornithine and N-acetyl-L-glutamate from L-glutamate and N(2)-acetyl-L-ornithine (cyclic): step 1/1. Its pathway is amino-acid biosynthesis; L-arginine biosynthesis; N(2)-acetyl-L-ornithine from L-glutamate: step 1/4. Functionally, catalyzes two activities which are involved in the cyclic version of arginine biosynthesis: the synthesis of N-acetylglutamate from glutamate and acetyl-CoA as the acetyl donor, and of ornithine by transacetylation between N(2)-acetylornithine and glutamate. The sequence is that of Arginine biosynthesis bifunctional protein ArgJ 2 from Nostoc sp. (strain PCC 7120 / SAG 25.82 / UTEX 2576).